Reading from the N-terminus, the 273-residue chain is Shikimate dehydrogenase (NADP(+)) (273 aa).

Shikimate contacts are provided by residues 14–16 (SKS) and threonine 61. The active-site Proton acceptor is the lysine 65. Residue aspartate 77 participates in NADP(+) binding. Shikimate-binding residues include asparagine 86 and aspartate 102. Residues 126 to 130 (GAGGA), 150 to 155 (NRTYEK), and methionine 213 each bind NADP(+). Shikimate is bound at residue tyrosine 215. Glycine 237 serves as a coordination point for NADP(+).

The protein belongs to the shikimate dehydrogenase family. In terms of assembly, homodimer.

The catalysed reaction is shikimate + NADP(+) = 3-dehydroshikimate + NADPH + H(+). It participates in metabolic intermediate biosynthesis; chorismate biosynthesis; chorismate from D-erythrose 4-phosphate and phosphoenolpyruvate: step 4/7. Involved in the biosynthesis of the chorismate, which leads to the biosynthesis of aromatic amino acids. Catalyzes the reversible NADPH linked reduction of 3-dehydroshikimate (DHSA) to yield shikimate (SA). The sequence is that of Shikimate dehydrogenase (NADP(+)) from Aliivibrio salmonicida (strain LFI1238) (Vibrio salmonicida (strain LFI1238)).